Consider the following 221-residue polypeptide: MRAVVVLSGGMDSTTLLYDVKSQGYEVFAISFLYGQKHSKELEFAKKTCSLLSIPYKIVDISFFAELAPSALTTPDWNVPEGYYTDSTMKQTVVPNRNMVLLSISAAYAISLGAKKLFYGAHAGDHPIYPDCRKEFVEAMKNALYLADYIGLELEAPYVDMKKEDILRRGLELGVNYSLTWSCYKGGQKACGRCGTCTERIEAFKKVGVKDPIEYEIEIDW.

Residue leucine 7–leucine 17 participates in ATP binding. Zn(2+)-binding residues include cysteine 183, cysteine 191, cysteine 194, and cysteine 197.

It belongs to the QueC family. In terms of assembly, homodimer. Zn(2+) serves as cofactor.

It carries out the reaction 7-carboxy-7-deazaguanine + NH4(+) + ATP = 7-cyano-7-deazaguanine + ADP + phosphate + H2O + H(+). It participates in purine metabolism; 7-cyano-7-deazaguanine biosynthesis. Its function is as follows. Catalyzes the ATP-dependent conversion of 7-carboxy-7-deazaguanine (CDG) to 7-cyano-7-deazaguanine (preQ(0)). This Caldicellulosiruptor bescii (strain ATCC BAA-1888 / DSM 6725 / KCTC 15123 / Z-1320) (Anaerocellum thermophilum) protein is 7-cyano-7-deazaguanine synthase.